The chain runs to 133 residues: Peptide methionine sulfoxide reductase MsrB (133 aa).

Positions 8 to 130 constitute a MsrB domain; that stretch reads LEEWRAMLDP…NSVCLDFKPR (123 aa). Residues cysteine 47, cysteine 50, cysteine 96, and cysteine 99 each coordinate Zn(2+). Cysteine 119 acts as the Nucleophile in catalysis.

Belongs to the MsrB Met sulfoxide reductase family. Zn(2+) serves as cofactor.

It catalyses the reaction L-methionyl-[protein] + [thioredoxin]-disulfide + H2O = L-methionyl-(R)-S-oxide-[protein] + [thioredoxin]-dithiol. This Pseudomonas putida (strain W619) protein is Peptide methionine sulfoxide reductase MsrB.